The primary structure comprises 416 residues: Keratin, type I cuticular Ha1 (416 aa).

Residues 1-56 (MPYNFCLPSLSCRTSCSSRPCVPPSCHSCTLPGACNIPANVSNCNWFCEGSFNGSE) form a head region. Residues 56-367 (EKETMQFLND…SLLESEDCNL (312 aa)) enclose the IF rod domain. The coil 1A stretch occupies residues 57–91 (KETMQFLNDRLASYLEKVRQLERDNAELENLIRER). Positions 92-102 (SQQQEPLLCPS) are linker 1. A coil 1B region spans residues 103–203 (YQSYFKTIEE…HEQEVNTLRC (101 aa)). Positions 204–219 (QLGDRLNVEVDAAPTV) are linker 12. The tract at residues 220–363 (DLNRVLNETR…NTYRSLLESE (144 aa)) is coil 2. Positions 364–416 (DCNLPSNPCATTNACSKPIGPCLSNPCTSCVPPAPCTPCAPRPRCGPCNSFVR) are tail.

It belongs to the intermediate filament family. Present in scalp but not in hairless skin. Abundantly expressed in the differentiating cortex of growing (anagen) hair. Expression is restricted to the keratinocytes of the hair cortex and is absent from inner root sheath and medulla.

This chain is Keratin, type I cuticular Ha1 (KRT31), found in Homo sapiens (Human).